We begin with the raw amino-acid sequence, 184 residues long: Interferon alpha-1 (184 aa).

The first 23 residues, 1–23 (MALPVSLLMALVVLSCHSICSLG), serve as a signal peptide directing secretion. Disulfide bonds link Cys24-Cys122 and Cys52-Cys162.

It belongs to the alpha/beta interferon family. As to quaternary structure, interacts with CR2.

The protein resides in the secreted. Functionally, produced by macrophages, IFN-alpha have antiviral activities. Interferon stimulates the production of two enzymes: a protein kinase and an oligoadenylate synthetase. In Equus caballus (Horse), this protein is Interferon alpha-1.